The following is a 352-amino-acid chain: Transcriptional regulatory protein AlgP (352 aa).

A disordered region spans residues 128 to 352; that stretch reads KALESRKAKP…SNGAAPTSAS (225 aa). The segment covering 138-341 has biased composition (low complexity); it reads ATKPAAKAAA…SSAASATPAA (204 aa).

Functionally, the promoter for a critical alginate biosynthetic gene, AlgD, encoding GDP-mannose dehydrogenase, is activated only under conditions reminiscent of the cystic fibrosis lung (i.e. under high osmolarity), and at least two regulatory genes, AlgP and AlgQ, have been implicated in this activation process. The sequence is that of Transcriptional regulatory protein AlgP (algP) from Pseudomonas aeruginosa (strain ATCC 15692 / DSM 22644 / CIP 104116 / JCM 14847 / LMG 12228 / 1C / PRS 101 / PAO1).